A 275-amino-acid chain; its full sequence is 3-methyl-2-oxobutanoate hydroxymethyltransferase (275 aa).

The Mg(2+) site is built by Asp49 and Asp88. 3-methyl-2-oxobutanoate contacts are provided by residues 49 to 50 (DS), Asp88, and Lys118. Position 120 (Glu120) interacts with Mg(2+). Residue Glu187 is the Proton acceptor of the active site.

This sequence belongs to the PanB family. In terms of assembly, homodecamer; pentamer of dimers. It depends on Mg(2+) as a cofactor.

It localises to the cytoplasm. It catalyses the reaction 3-methyl-2-oxobutanoate + (6R)-5,10-methylene-5,6,7,8-tetrahydrofolate + H2O = 2-dehydropantoate + (6S)-5,6,7,8-tetrahydrofolate. It functions in the pathway cofactor biosynthesis; (R)-pantothenate biosynthesis; (R)-pantoate from 3-methyl-2-oxobutanoate: step 1/2. Functionally, catalyzes the reversible reaction in which hydroxymethyl group from 5,10-methylenetetrahydrofolate is transferred onto alpha-ketoisovalerate to form ketopantoate. This is 3-methyl-2-oxobutanoate hydroxymethyltransferase from Bartonella henselae (strain ATCC 49882 / DSM 28221 / CCUG 30454 / Houston 1) (Rochalimaea henselae).